Here is a 70-residue protein sequence, read N- to C-terminus: DNA-directed RNA polymerase subunit omega (70 aa).

Belongs to the RNA polymerase subunit omega family. The RNAP catalytic core consists of 2 alpha, 1 beta, 1 beta' and 1 omega subunit. When a sigma factor is associated with the core the holoenzyme is formed, which can initiate transcription.

The catalysed reaction is RNA(n) + a ribonucleoside 5'-triphosphate = RNA(n+1) + diphosphate. Its function is as follows. Promotes RNA polymerase assembly. Latches the N- and C-terminal regions of the beta' subunit thereby facilitating its interaction with the beta and alpha subunits. This chain is DNA-directed RNA polymerase subunit omega, found in Bacillus anthracis.